The primary structure comprises 621 residues: Chaperone protein HtpG (621 aa).

The interval 1–341 (MSNQEYTFQT…SEDLPLNVSR (341 aa)) is a; substrate-binding. Residues 342–547 (EILQQNKILA…GDEQNAMMAN (206 aa)) form a b region. A c region spans residues 548–621 (WMRQMGQSVP…RLNSVLLKAL (74 aa)).

Belongs to the heat shock protein 90 family. As to quaternary structure, homodimer.

It is found in the cytoplasm. In terms of biological role, molecular chaperone. Has ATPase activity. In Helicobacter pylori (strain ATCC 700392 / 26695) (Campylobacter pylori), this protein is Chaperone protein HtpG.